A 303-amino-acid polypeptide reads, in one-letter code: Probable acetylxylan esterase A (303 aa).

The first 23 residues, 1–23 (MLSTHLLFLATTLLTSLFHPIAA), serve as a signal peptide directing secretion. S147 (charge relay system) is an active-site residue. N189 is a glycosylation site (N-linked (GlcNAc...) asparagine).

Belongs to the carbohydrate esterase 1 (CE1) family. AxeA subfamily. In terms of assembly, monomer.

It is found in the secreted. The catalysed reaction is Deacetylation of xylans and xylo-oligosaccharides.. Its pathway is glycan degradation; xylan degradation. Acetylxylan esterase involved in the hydrolysis of xylan, a major structural heterogeneous polysaccharide found in plant biomass representing the second most abundant polysaccharide in the biosphere, after cellulose. Degrades acetylated xylans by cleaving acetyl side groups from the hetero-xylan backbone. The chain is Probable acetylxylan esterase A (axeA) from Aspergillus niger (strain ATCC MYA-4892 / CBS 513.88 / FGSC A1513).